The chain runs to 321 residues: RNA/RNP complex-1-interacting phosphatase (321 aa).

Positions 1-11 (MNQHYGRHGRG) are enriched in basic residues. The tract at residues 1–27 (MNQHYGRHGRGRGRDFAACAPPKKKGR) is disordered. The 148-residue stretch at 60–207 (FEAKLMPEEC…LQKRHVRKNR (148 aa)) folds into the Tyrosine-protein phosphatase domain. Cysteine 151 (phosphocysteine intermediate) is an active-site residue. 152-157 (THGLNR) provides a ligand contact to substrate. The active-site Proton donor/acceptor is the arginine 157. A disordered region spans residues 205 to 262 (KNRNVSAPRTDGLEDSADPTEQVYTNNKPVKKKPRKNRRGGHLAPSQHFQHQTQSSPY). The span at 233–245 (PVKKKPRKNRRGG) shows a compositional bias: basic residues. Positions 251–262 (QHFQHQTQSSPY) are enriched in polar residues.

The protein belongs to the protein-tyrosine phosphatase family. Non-receptor class dual specificity subfamily. In terms of assembly, monomer. May interact with SFRS7 and SFRS9/SRP30C.

It localises to the nucleus. Its subcellular location is the nucleus speckle. Possesses RNA 5'-triphosphatase and diphosphatase activities, but displays a poor protein-tyrosine phosphatase activity. In addition, has phosphatase activity with ATP, ADP and O-methylfluorescein phosphate (in vitro). Binds to RNA. May participate in nuclear mRNA metabolism. The polypeptide is RNA/RNP complex-1-interacting phosphatase (Dusp11) (Mus musculus (Mouse)).